We begin with the raw amino-acid sequence, 350 residues long: Heat-inducible transcription repressor HrcA (350 aa).

The protein belongs to the HrcA family.

Its function is as follows. Negative regulator of class I heat shock genes (grpE-dnaK-dnaJ and groELS operons). Prevents heat-shock induction of these operons. This is Heat-inducible transcription repressor HrcA from Xanthomonas euvesicatoria pv. vesicatoria (strain 85-10) (Xanthomonas campestris pv. vesicatoria).